The chain runs to 763 residues: Xaa-Pro dipeptidyl-peptidase (763 aa).

Residues Ser348, Asp468, and His498 each act as charge relay system in the active site.

This sequence belongs to the peptidase S15 family. As to quaternary structure, homodimer.

It localises to the cytoplasm. It carries out the reaction Hydrolyzes Xaa-Pro-|- bonds to release unblocked, N-terminal dipeptides from substrates including Ala-Pro-|-p-nitroanilide and (sequentially) Tyr-Pro-|-Phe-Pro-|-Gly-Pro-|-Ile.. Removes N-terminal dipeptides sequentially from polypeptides having unsubstituted N-termini provided that the penultimate residue is proline. The protein is Xaa-Pro dipeptidyl-peptidase of Lactococcus lactis subsp. cremoris (strain SK11).